The primary structure comprises 190 residues: Ohanin (190 aa).

An N-terminal signal peptide occupies residues 1–20 (MLLFTLCFFADQENGGKALA). The B30.2/SPRY domain maps to 21-127 (SPPGNWQKAD…RIWQKGLWWL (107 aa)). Residues 128-190 (RRLETDSDKL…IGARVSLANL (63 aa)) constitute a propeptide that is removed on maturation.

In terms of tissue distribution, expressed by the venom gland.

Its subcellular location is the secreted. In terms of biological role, neurotoxin that produces dose-dependent hypolocomotion and hyperalgesia in mice. May directly act on the central nervous system, as it is 6500-fold more potent when administered intracerebroventricularly than intraperitoneal. In Ophiophagus hannah (King cobra), this protein is Ohanin.